The primary structure comprises 468 residues: 3-isopropylmalate dehydratase large subunit (468 aa).

Residues cysteine 347, cysteine 407, and cysteine 410 each contribute to the [4Fe-4S] cluster site.

This sequence belongs to the aconitase/IPM isomerase family. LeuC type 1 subfamily. As to quaternary structure, heterodimer of LeuC and LeuD. Requires [4Fe-4S] cluster as cofactor.

It carries out the reaction (2R,3S)-3-isopropylmalate = (2S)-2-isopropylmalate. It functions in the pathway amino-acid biosynthesis; L-leucine biosynthesis; L-leucine from 3-methyl-2-oxobutanoate: step 2/4. Functionally, catalyzes the isomerization between 2-isopropylmalate and 3-isopropylmalate, via the formation of 2-isopropylmaleate. This Prochlorococcus marinus (strain SARG / CCMP1375 / SS120) protein is 3-isopropylmalate dehydratase large subunit.